The chain runs to 477 residues: Protein translocase subunit SecY (477 aa).

Transmembrane regions (helical) follow at residues 28–48 (FMIS…LAII), 67–89 (FFSL…AVGI), 130–150 (IITL…ATNS), 165–185 (DFVA…VFLG), 196–216 (GITL…FIAA), 234–254 (AISF…TTFI), 286–306 (SAGV…VTIA), 329–349 (GIVL…YIQI), 387–407 (FIGA…SALI), and 413–433 (LSLG…FMSA).

Belongs to the SecY/SEC61-alpha family. In terms of assembly, component of the Sec protein translocase complex. Heterotrimer consisting of SecY, SecE and SecG subunits. The heterotrimers can form oligomers, although 1 heterotrimer is thought to be able to translocate proteins. Interacts with the ribosome. Interacts with SecDF, and other proteins may be involved. Interacts with SecA.

The protein resides in the cell membrane. Functionally, the central subunit of the protein translocation channel SecYEG. Consists of two halves formed by TMs 1-5 and 6-10. These two domains form a lateral gate at the front which open onto the bilayer between TMs 2 and 7, and are clamped together by SecE at the back. The channel is closed by both a pore ring composed of hydrophobic SecY resides and a short helix (helix 2A) on the extracellular side of the membrane which forms a plug. The plug probably moves laterally to allow the channel to open. The ring and the pore may move independently. The sequence is that of Protein translocase subunit SecY from Mycoplasma pneumoniae (strain ATCC 29342 / M129 / Subtype 1) (Mycoplasmoides pneumoniae).